Consider the following 211-residue polypeptide: Sec-independent protein translocase protein TatB (211 aa).

A helical transmembrane segment spans residues Met-1–Gly-21. Positions Ala-175 to Pro-211 are disordered. Residues Thr-194–Thr-204 show a composition bias toward polar residues.

The protein belongs to the TatB family. As to quaternary structure, the Tat system comprises two distinct complexes: a TatABC complex, containing multiple copies of TatA, TatB and TatC subunits, and a separate TatA complex, containing only TatA subunits. Substrates initially bind to the TatABC complex, which probably triggers association of the separate TatA complex to form the active translocon.

It localises to the cell inner membrane. In terms of biological role, part of the twin-arginine translocation (Tat) system that transports large folded proteins containing a characteristic twin-arginine motif in their signal peptide across membranes. Together with TatC, TatB is part of a receptor directly interacting with Tat signal peptides. TatB may form an oligomeric binding site that transiently accommodates folded Tat precursor proteins before their translocation. This is Sec-independent protein translocase protein TatB from Xanthomonas oryzae pv. oryzae (strain MAFF 311018).